Consider the following 808-residue polypeptide: Putative dimethyl sulfoxide reductase chain YnfE (808 aa).

The tat-type signal signal peptide spans 1-43 (MSKNERMVGISRRTLVKSTAIGSLALAAGGFSLPFTLRNAAAA). Residues 49–110 (EKVVWGACSV…SIRRRINHPD (62 aa)) form the 4Fe-4S Mo/W bis-MGD-type domain. The [4Fe-4S] cluster site is built by Cys-56, Cys-60, Cys-64, and Cys-96. Ser-196 serves as a coordination point for Mo-bis(molybdopterin guanine dinucleotide).

The protein belongs to the prokaryotic molybdopterin-containing oxidoreductase family. [4Fe-4S] cluster is required as a cofactor. It depends on Mo-bis(molybdopterin guanine dinucleotide) as a cofactor. Exported by the Tat system. The position of the signal peptide cleavage has not been experimentally proven.

It localises to the cell membrane. Its function is as follows. Terminal reductase during anaerobic growth on various sulfoxide and N-oxide compounds. The protein is Putative dimethyl sulfoxide reductase chain YnfE (ynfE) of Escherichia coli (strain K12).